A 77-amino-acid polypeptide reads, in one-letter code: Acyl carrier protein (77 aa).

The region spanning 2 to 77 (SNIEERVKKI…AAIDYVNSAQ (76 aa)) is the Carrier domain. Ser-37 carries the O-(pantetheine 4'-phosphoryl)serine modification.

Belongs to the acyl carrier protein (ACP) family. Post-translationally, 4'-phosphopantetheine is transferred from CoA to a specific serine of apo-ACP by AcpS. This modification is essential for activity because fatty acids are bound in thioester linkage to the sulfhydryl of the prosthetic group.

The protein resides in the cytoplasm. It participates in lipid metabolism; fatty acid biosynthesis. Functionally, carrier of the growing fatty acid chain in fatty acid biosynthesis. The protein is Acyl carrier protein of Vibrio campbellii (strain ATCC BAA-1116).